A 120-amino-acid chain; its full sequence is Myohemerythrin (120 aa).

H26, H56, E60, H75, H79, H108, and D113 together coordinate Fe cation.

This sequence belongs to the hemerythrin family.

Its function is as follows. Myohemerythrin is an oxygen-binding protein found in the retractor muscles of certain worms. The oxygen-binding site contains two iron atoms. The sequence is that of Myohemerythrin from Sipunculus nudus (Sipunculan worm).